The chain runs to 121 residues: Dihydroneopterin aldolase (121 aa).

Residues Glu-22, Tyr-54, and 73–74 (IE) each bind substrate. Lys-100 serves as the catalytic Proton donor/acceptor.

This sequence belongs to the DHNA family. In terms of assembly, homooctamer. Four molecules assemble into a ring, and two rings come together to give a cylinder with a hole of at least 13 a diameter.

The enzyme catalyses 7,8-dihydroneopterin = 6-hydroxymethyl-7,8-dihydropterin + glycolaldehyde. It catalyses the reaction 7,8-dihydroneopterin = 7,8-dihydromonapterin. The protein operates within cofactor biosynthesis; tetrahydrofolate biosynthesis; 2-amino-4-hydroxy-6-hydroxymethyl-7,8-dihydropteridine diphosphate from 7,8-dihydroneopterin triphosphate: step 3/4. In terms of biological role, catalyzes the conversion of 7,8-dihydroneopterin to 6-hydroxymethyl-7,8-dihydropterin. Can also catalyze the epimerization of carbon 2' of dihydroneopterin to dihydromonapterin. This is Dihydroneopterin aldolase (folB) from Staphylococcus epidermidis (strain ATCC 35984 / DSM 28319 / BCRC 17069 / CCUG 31568 / BM 3577 / RP62A).